Reading from the N-terminus, the 804-residue chain is Leucine--tRNA ligase (804 aa).

The 'HIGH' region motif lies at 39 to 50 (PYPSGAGLHVGH). Positions 580 to 584 (KMSKS) match the 'KMSKS' region motif. Lys-583 provides a ligand contact to ATP.

It belongs to the class-I aminoacyl-tRNA synthetase family.

The protein resides in the cytoplasm. The enzyme catalyses tRNA(Leu) + L-leucine + ATP = L-leucyl-tRNA(Leu) + AMP + diphosphate. In Mycoplasma mycoides subsp. mycoides SC (strain CCUG 32753 / NCTC 10114 / PG1), this protein is Leucine--tRNA ligase.